A 370-amino-acid polypeptide reads, in one-letter code: MESADLRDPDGMPVTLSDFEIDAAGRLSADLLAYLEGGAEAGQSVTENRAAFGRIGLLPKLLSPCAGGHTRTTILGKQAPHPIMVAPMAFQNLFHPQGESATAMAAAAQDATMVLSCQTSTPPEDIATIPGRRWFQLYMQADHEATMALVTRAVDCGADALVVTLDAPINGLRDREVAAGFTLPDDVRPVMLDVLPQPPRPHLRDGQSVVFDGMMVFAPTADDLARLIADSPVPVIVKGCLRPADATRLIDLGAQGIIVSNHGGRVLDTVPAPITQLAAVVDAVAGAVPVYVDGGIRRGSDVFKALALGAQAVLVGRPVMHGLIVDGPRGASQVLRRLRDELEVTMALCGCATVADITPDLLTGFSGTGS.

The region spanning 8 to 367 (DPDGMPVTLS…TPDLLTGFSG (360 aa)) is the FMN hydroxy acid dehydrogenase domain. Pyruvate is bound at residue Tyr34. FMN-binding positions include 87-89 (PMA), Ser116, and Gln136. Residue Tyr138 coordinates pyruvate. Thr164 provides a ligand contact to FMN. Arg173 serves as a coordination point for pyruvate. Lys238 and Ser260 together coordinate FMN. The pyruvate site is built by His262 and Arg265. His262 serves as the catalytic Proton acceptor. FMN contacts are provided by residues 293 to 297 (DGGIR) and Arg317.

It belongs to the FMN-dependent alpha-hydroxy acid dehydrogenase family. In terms of assembly, homotetramer. The cofactor is FMN.

It catalyses the reaction (S)-lactate + O2 = pyruvate + H2O2. The catalysed reaction is a (2S)-2-hydroxycarboxylate + O2 = a 2-oxocarboxylate + H2O2. It carries out the reaction glycolate + O2 = glyoxylate + H2O2. The enzyme catalyses 2-hydroxyoctadecanoate + O2 = 2-oxooctadecanoate + H2O2. Catalyzes the oxidation of (S)-lactate (L-lactate) to pyruvate, with a reduction of O2 to H2O2. Is also able to use glycolate and to a lesser extent 2-hydroxyoctadecanoate as substrate. This Roseobacter sp. (strain GAI101) protein is L-lactate oxidase.